Reading from the N-terminus, the 568-residue chain is Glucose-6-phosphate isomerase, cytosolic 1 (568 aa).

Glutamate 360 acts as the Proton donor in catalysis. Catalysis depends on residues histidine 391 and lysine 516.

This sequence belongs to the GPI family. In terms of assembly, homodimer.

It is found in the cytoplasm. The enzyme catalyses alpha-D-glucose 6-phosphate = beta-D-fructose 6-phosphate. It participates in carbohydrate degradation; glycolysis; D-glyceraldehyde 3-phosphate and glycerone phosphate from D-glucose: step 2/4. The protein is Glucose-6-phosphate isomerase, cytosolic 1 (PGIC1) of Clarkia arcuata (Glandular clarkia).